We begin with the raw amino-acid sequence, 644 residues long: Forkhead box protein O (644 aa).

The tract at residues 39–75 is disordered; the sequence is FEPQTRARSNTWPCPRPENFVEPPDELDSTKASNQQL. Position 49 is a phosphothreonine; by PKB/AKT1 (Thr-49). Residue Ser-80 is modified to Phosphoserine. Residues 100–206 constitute a DNA-binding region (fork-head); it reads WGNLSYADLI…ETSRYEKRRG (107 aa). Disordered regions lie at residues 187-210, 222-276, 329-386, 412-435, and 578-612; these read KSVR…RAKK, GLND…SPIR, QQQQ…QTLQ, SPNS…DSLN, and QQHL…NSSL. Ser-195 is subject to Phosphoserine; by PKB/AKT1. Polar residues-rich tracts occupy residues 226-235 and 261-270; these read ATPSPSSSVS and RASSNASSCG. Ser-264 is subject to Phosphoserine; by PKB/AKT1. Residues Ser-267, Ser-268, and Ser-273 each carry the phosphoserine modification. A compositionally biased stretch (low complexity) spans 329–340; that stretch reads QQQQQQQQQQQQ. Over residues 350-359 the composition is skewed to pro residues; sequence SQPPPPPYQP. A compositionally biased stretch (low complexity) spans 360–374; sequence PQLQQQQQQQPSYSL. Residues 412-421 show a composition bias toward polar residues; that stretch reads SPNSVTTTMS.

Interacts with melt.

It is found in the cytoplasm. The protein localises to the nucleus. In terms of biological role, transcription factor involved in the regulation of the insulin signaling pathway. Consistently activates both the downstream target Thor\d4EBP and the feedback control target InR. Involved in negative regulation of the cell cycle, modulating cell growth and proliferation. In response to cellular stresses, such as nutrient deprivation or increased levels of reactive oxygen species, foxo is activated and inhibits growth through the action of target genes such as Thor. Foxo activated in the adult fat body can regulate lifespan in adults; an insulin peptide itself may function as one secondary messenger of insulin-regulated aging. Also regulates Lip4, homolog of human acid lipases, thereby acting as a key modulator of lipid metabolism by insulin signaling and integrates insulin responses to glucose and lipid homeostasis. The chain is Forkhead box protein O from Drosophila pseudoobscura pseudoobscura (Fruit fly).